A 129-amino-acid polypeptide reads, in one-letter code: MPTYNQLVRFGRKSKTRKTKSPALESNPFKSGVCLVVKTVTPKKPNSALRKIATVRLSNKRTVNAYIPGEKHSVKEHDRVLVRGGQVPDLPGVKYHIVLGAYDIAGVKGRKQGRSRYGAPSKQVAVTKK.

The interval 1–25 (MPTYNQLVRFGRKSKTRKTKSPALE) is disordered. The span at 10–20 (FGRKSKTRKTK) shows a compositional bias: basic residues. D89 carries the 3-methylthioaspartic acid modification. Residues 110–129 (RKQGRSRYGAPSKQVAVTKK) are disordered.

It belongs to the universal ribosomal protein uS12 family. Part of the 30S ribosomal subunit. Contacts proteins S8 and S17. May interact with IF1 in the 30S initiation complex.

Its function is as follows. With S4 and S5 plays an important role in translational accuracy. Interacts with and stabilizes bases of the 16S rRNA that are involved in tRNA selection in the A site and with the mRNA backbone. Located at the interface of the 30S and 50S subunits, it traverses the body of the 30S subunit contacting proteins on the other side and probably holding the rRNA structure together. The combined cluster of proteins S8, S12 and S17 appears to hold together the shoulder and platform of the 30S subunit. In Rickettsia canadensis (strain McKiel), this protein is Small ribosomal subunit protein uS12.